The sequence spans 945 residues: Isoleucine--tRNA ligase (945 aa).

A 'HIGH' region motif is present at residues 66–76 (PYANGDIHLGH). Glu-581 serves as a coordination point for L-isoleucyl-5'-AMP. Residues 622-626 (KMSKS) carry the 'KMSKS' region motif. Lys-625 contacts ATP. Residues Cys-908, Cys-911, Cys-928, and Cys-931 each contribute to the Zn(2+) site.

This sequence belongs to the class-I aminoacyl-tRNA synthetase family. IleS type 1 subfamily. As to quaternary structure, monomer. Zn(2+) is required as a cofactor.

It is found in the cytoplasm. The catalysed reaction is tRNA(Ile) + L-isoleucine + ATP = L-isoleucyl-tRNA(Ile) + AMP + diphosphate. Catalyzes the attachment of isoleucine to tRNA(Ile). As IleRS can inadvertently accommodate and process structurally similar amino acids such as valine, to avoid such errors it has two additional distinct tRNA(Ile)-dependent editing activities. One activity is designated as 'pretransfer' editing and involves the hydrolysis of activated Val-AMP. The other activity is designated 'posttransfer' editing and involves deacylation of mischarged Val-tRNA(Ile). This is Isoleucine--tRNA ligase from Burkholderia ambifaria (strain ATCC BAA-244 / DSM 16087 / CCUG 44356 / LMG 19182 / AMMD) (Burkholderia cepacia (strain AMMD)).